We begin with the raw amino-acid sequence, 153 residues long: FAD synthase (153 aa).

Residues 9–10 (TF), 14–17 (HPGH), Asp97, and Tyr124 contribute to the ATP site.

The protein belongs to the archaeal FAD synthase family. Homodimer. It depends on a divalent metal cation as a cofactor.

The catalysed reaction is FMN + ATP + H(+) = FAD + diphosphate. Its pathway is cofactor biosynthesis; FAD biosynthesis; FAD from FMN: step 1/1. Its function is as follows. Catalyzes the transfer of the AMP portion of ATP to flavin mononucleotide (FMN) to produce flavin adenine dinucleotide (FAD) coenzyme. This chain is FAD synthase, found in Methanobrevibacter smithii (strain ATCC 35061 / DSM 861 / OCM 144 / PS).